Reading from the N-terminus, the 466-residue chain is Keratin, type II cytoskeletal 7 (466 aa).

Residue Ser-2 is modified to N-acetylserine. Ser-2 and Ser-7 each carry phosphoserine. The interval 2–91 (SLHFGSQVFS…DPSIQQVRQE (90 aa)) is head. Ser-12 carries an O-linked (GlcNAc) serine glycan. Dimethylated arginine; alternate is present on Arg-20. Arg-20 is subject to Omega-N-methylarginine; alternate. Phosphoserine occurs at positions 54, 72, and 84. A coil 1A region spans residues 91-127 (EEREQIKTLNNKFASFIDKVRFLEQQNKLLETKWALL). The IF rod domain maps to 92-404 (EREQIKTLNN…KLLEGEESRL (313 aa)). Thr-98 is modified (phosphothreonine). The interval 128–145 (QEQKSAKSNRLPGIFEAQ) is linker 1. Lys-131 participates in a covalent cross-link: Glycyl lysine isopeptide (Lys-Gly) (interchain with G-Cter in SUMO2). Positions 146–237 (IAGLRKQLEA…TLYEQELKEL (92 aa)) are coil 1B. Residue Lys-180 is modified to N6-acetyllysine. The linker 12 stretch occupies residues 238–261 (QSEVSDTSVVLSMDNNRSLDLDSI). A Phosphoserine modification is found at Ser-255. Residues 262–400 (IAEVKAQYEE…ATYRKLLEGE (139 aa)) are coil 2. Residues Lys-266 and Lys-287 each participate in a glycyl lysine isopeptide (Lys-Gly) (interchain with G-Cter in SUMO2) cross-link. Thr-290 is subject to Phosphothreonine. Glycyl lysine isopeptide (Lys-Gly) (interchain with G-Cter in SUMO2) cross-links involve residues Lys-297 and Lys-332. Residues 401 to 466 (ESRLTGDGVG…TSATSRSPRK (66 aa)) form a tail region.

The protein belongs to the intermediate filament family. Heterotetramer of two type I and two type II keratins. Interacts with eukaryotic translation initiator factor 3 (eIF3) subunit EIF3S10. Interacts with GPER1. In terms of processing, arg-20 is dimethylated, probably to asymmetric dimethylarginine.

Blocks interferon-dependent interphase and stimulates DNA synthesis in cells. The polypeptide is Keratin, type II cytoskeletal 7 (Bos taurus (Bovine)).